A 103-amino-acid chain; its full sequence is UPF0145 protein BC_5181 (103 aa).

The protein belongs to the UPF0145 family.

The protein is UPF0145 protein BC_5181 of Bacillus cereus (strain ATCC 14579 / DSM 31 / CCUG 7414 / JCM 2152 / NBRC 15305 / NCIMB 9373 / NCTC 2599 / NRRL B-3711).